Reading from the N-terminus, the 220-residue chain is Cytidylate kinase (220 aa).

Position 9–17 (9–17) interacts with ATP; the sequence is GPAASGKST.

The protein belongs to the cytidylate kinase family. Type 1 subfamily.

The protein resides in the cytoplasm. It carries out the reaction CMP + ATP = CDP + ADP. The catalysed reaction is dCMP + ATP = dCDP + ADP. The protein is Cytidylate kinase of Thermotoga maritima (strain ATCC 43589 / DSM 3109 / JCM 10099 / NBRC 100826 / MSB8).